Consider the following 227-residue polypeptide: MMLHIPGVLTKAQVAQCRELLDAAEWIDGNATSGTQSAQAKRNRQLPEGAPAARAVGDAIQDALARHPLFFSAALPLKVFPPLFNRYEGGETFGTHVDNAIRLLRGTDFRVRSDLSATLFLEEPDAYDGGELCVEDTYGTHRAKLPAGDLVLYPASSLHHVTPVTRGERVASFFWIQSMVRDDGDRTLLFQLDTQIQALSAEKGAKDPMVISLTGIYHNLLRKWADA.

Residues 78–178 (KVFPPLFNRY…RVASFFWIQS (101 aa)) form the Fe2OG dioxygenase domain. The Fe cation site is built by His96, Asp98, and His159. Arg169 is a 2-oxoglutarate binding site.

The cofactor is Fe(2+). L-ascorbate is required as a cofactor.

This Burkholderia lata (strain ATCC 17760 / DSM 23089 / LMG 22485 / NCIMB 9086 / R18194 / 383) protein is PKHD-type hydroxylase Bcep18194_B0892.